A 208-amino-acid polypeptide reads, in one-letter code: Pyrrolidone-carboxylate peptidase (208 aa).

Catalysis depends on residues glutamate 79, cysteine 142, and histidine 166.

Belongs to the peptidase C15 family. In terms of assembly, homotetramer made of two disulfide-linked dimers.

The protein resides in the cytoplasm. It catalyses the reaction Release of an N-terminal pyroglutamyl group from a polypeptide, the second amino acid generally not being Pro.. Functionally, removes 5-oxoproline from various penultimate amino acid residues except L-proline. This is Pyrrolidone-carboxylate peptidase (pcp) from Pyrococcus furiosus (strain ATCC 43587 / DSM 3638 / JCM 8422 / Vc1).